The primary structure comprises 470 residues: 3-isopropylmalate dehydratase large subunit (470 aa).

[4Fe-4S] cluster-binding residues include C346, C406, and C409.

It belongs to the aconitase/IPM isomerase family. LeuC type 1 subfamily. In terms of assembly, heterodimer of LeuC and LeuD. It depends on [4Fe-4S] cluster as a cofactor.

It carries out the reaction (2R,3S)-3-isopropylmalate = (2S)-2-isopropylmalate. Its pathway is amino-acid biosynthesis; L-leucine biosynthesis; L-leucine from 3-methyl-2-oxobutanoate: step 2/4. Catalyzes the isomerization between 2-isopropylmalate and 3-isopropylmalate, via the formation of 2-isopropylmaleate. This chain is 3-isopropylmalate dehydratase large subunit, found in Shouchella clausii (strain KSM-K16) (Alkalihalobacillus clausii).